A 426-amino-acid polypeptide reads, in one-letter code: Interferon regulatory factor 8 (426 aa).

A DNA-binding region (IRF tryptophan pentad repeat) is located at residues 7 to 114 (GRRLRQWLIE…EPYKVYRIVP (108 aa)).

It belongs to the IRF family. Interacts (via C-terminus) with TRIM21 (via C-terminus). Interacts with the BATF-JUNB heterodimer. Interacts with BATF (via bZIP domain); the interaction is direct. Interacts with COPS2. Interacts with SPI1. In terms of processing, ubiquitinated. Ubiquitination by TRIM21 in macrophages, a process that is strongly increased upon interferon gamma stimulation, leds to the enhanced transcriptional activity of target cytokine genes. Ubiquitination leads to its degradation by the proteasome. Sumoylated with SUMO3. Desumoylated by SENP1. As to expression, predominantly expressed in lymphoid tissues.

Its subcellular location is the nucleus. The protein resides in the cytoplasm. Functionally, transcription factor that specifically binds to the upstream regulatory region of type I interferon (IFN) and IFN-inducible MHC class I genes (the interferon consensus sequence (ICS)). Can both act as a transcriptional activator or repressor. Plays a negative regulatory role in cells of the immune system. Involved in CD8(+) dendritic cell differentiation by forming a complex with the BATF-JUNB heterodimer in immune cells, leading to recognition of AICE sequence (5'-TGAnTCA/GAAA-3'), an immune-specific regulatory element, followed by cooperative binding of BATF and IRF8 and activation of genes. Required for the development of plasmacytoid dendritic cells (pDCs), which produce most of the type I IFN in response to viral infection. Positively regulates macroautophagy in dendritic cells. Acts as a transcriptional repressor of osteoclast differentiation factors such as NFATC1 and EEIG1. This chain is Interferon regulatory factor 8, found in Homo sapiens (Human).